A 105-amino-acid chain; its full sequence is Circadian clock oscillator protein KaiB (105 aa).

The protein belongs to the KaiB family. As to quaternary structure, the KaiABC complex composition changes during the circadian cycle to control KaiC phosphorylation. Complexes KaiC(6), KaiA(2-4):KaiC(6), KaiB(6):KaiC(6) and KaiC(6):KaiB(6):KaiA(12) are among the most important forms, many form cooperatively. Undergoes a major conformational rearrangment; in the free state forms homotetramers as a dimer of dimers. When bound to the CI domain of KaiC switches to a monomeric thioredoxin-fold (KaiB(fs)). KaiB(fs) binds CikA, leading it to dephosphorylate phospho-RpaA.

Its function is as follows. Key component of the KaiABC oscillator complex, which constitutes the main circadian regulator in cyanobacteria. Complex composition changes during the circadian cycle to control KaiC phosphorylation. KaiA stimulates KaiC autophosphorylation, while KaiB sequesters KaiA, leading to KaiC autodephosphorylation. Phospho-Ser-431 KaiC accumulation triggers binding of KaiB to form the KaiB(6):KaiC(6) complex, leading to changes in output regulators CikA and SasA. KaiB switches to a thioredoxin-like fold (KaiB(fs)) when bound to KaiC. KaiB(6):KaiC(6) formation exposes a site for KaiA binding that sequesters KaiA from KaiC, making the KaiC(6):KaiB(6):KaiA(12) complex that results in KaiC autodephosphorylation. In terms of biological role, a metamorphic protein which reversibly switches between an inactive tetrameric fold and a rare, thioredoxin-like monomeric fold (KaiB(fs)). KaiB(fs) binds phospho-KaiC, KaiA and CikA. KaiA and CikA compete for binding to KaiB(fs), and KaiB(fs) and SasA compete for binding to KaiC, thus the clock oscillator and output signal pathway are tightly coupled. This Cyanothece sp. (strain PCC 7425 / ATCC 29141) protein is Circadian clock oscillator protein KaiB.